Consider the following 123-residue polypeptide: MPTIKQLIRNTRQPIKNVTKSPALRGCPQRKGTCTRVYTITPKKPNSALRKVARVRLTSGFEITAYIPGIGHNLQEHSVVLVRGGRVKDLPGVRYHIVRGTLDAVGVKDRQQGRSKYGVKKPK.

Belongs to the universal ribosomal protein uS12 family. In terms of assembly, part of the 30S ribosomal subunit.

It localises to the plastid. The protein localises to the chloroplast. Functionally, with S4 and S5 plays an important role in translational accuracy. Located at the interface of the 30S and 50S subunits. The polypeptide is Small ribosomal subunit protein uS12cz/uS12cy (rps12-A) (Nandina domestica (Heavenly bamboo)).